The sequence spans 836 residues: Envelope glycoprotein gp160 (836 aa).

The N-terminal stretch at 1–21 is a signal peptide; that stretch reads MGMQSGWPFFCLLISLTIGSD. Topologically, residues 22–656 are extracellular; the sequence is PHWVTVYYGV…ITKWLWYIKI (635 aa). Cysteine 43 and cysteine 63 form a disulfide bridge. Asparagine 77, asparagine 121, asparagine 130, asparagine 134, asparagine 146, asparagine 150, asparagine 180, asparagine 189, asparagine 224, asparagine 228, asparagine 233, asparagine 254, asparagine 276, asparagine 282, asparagine 288, asparagine 318, asparagine 328, asparagine 340, and asparagine 341 each carry an N-linked (GlcNAc...) asparagine; by host glycan. 5 cysteine pairs are disulfide-bonded: cysteine 108-cysteine 197, cysteine 115-cysteine 188, cysteine 120-cysteine 147, cysteine 210-cysteine 239, and cysteine 220-cysteine 231. Residues 120-146 form a V1 region; it reads CNNSNGNSAGNSTTNRTEDLEDRQMKN. Residues 147–188 are V2; that stretch reads CSFNITTEIRDRKKQVYSLFYVEDVVPIKDGTDNNTYRLINC. The tract at residues 283-316 is V3; that stretch reads CTRPGNNTGGQVQIGPAMTFYNIEKIVGDVRQAY. Cysteine 283 and cysteine 317 form a disulfide bridge. Residues 349-359 are CD4-binding loop; it reads KNGGDLEVTHL. Cystine bridges form between cysteine 363–cysteine 418 and cysteine 370–cysteine 391. Residues 370 to 391 form a V4 region; it reads CNTSRLFNESENKTNKTIILPC. 6 N-linked (GlcNAc...) asparagine; by host glycosylation sites follow: asparagine 371, asparagine 377, asparagine 381, asparagine 384, asparagine 415, and asparagine 435. Positions 434 to 441 are V5; that stretch reads GNKTVYPS. Positions 482–503 are fusion peptide; sequence AAFGLGALFLGFLGAAGSTMGA. The immunosuppression stretch occupies residues 545-563; the sequence is KQLRAKVLAIERYLRDQQI. A disulfide bridge links cysteine 569 with cysteine 575. Residues asparagine 582, asparagine 588, asparagine 597, and asparagine 609 are each glycosylated (N-linked (GlcNAc...) asparagine; by host). Positions 605–639 form a coiled coil; it reads RKVRNYSGVIFDLIEQAQEQQNTNEKALLELDQWA. The segment at 634–655 is MPER; binding to GalCer; sequence ELDQWASLWNWFDITKWLWYIK. A helical transmembrane segment spans residues 657–677; the sequence is AIMVVAGIIGIRIISAIITII. The Cytoplasmic portion of the chain corresponds to 678–836; that stretch reads ARVRQGYSPL…IRQGLERALL (159 aa). Positions 684 to 687 match the YXXL motif; contains endocytosis signal motif; sequence YSPL. A disordered region spans residues 696–715; the sequence is AARGPDRPEETEEGVGGQDR. The Di-leucine internalization motif signature appears at 835–836; that stretch reads LL.

Belongs to the HIV-1 env protein family. As to quaternary structure, the mature envelope protein (Env) consists of a homotrimer of non-covalently associated gp120-gp41 heterodimers. The resulting complex protrudes from the virus surface as a spike. There seems to be as few as 10 spikes on the average virion. Interacts with host CD4, CCR5 and CXCR4. Gp120 also interacts with the C-type lectins CD209/DC-SIGN and CLEC4M/DC-SIGNR (collectively referred to as DC-SIGN(R)). Gp120 and gp41 interact with GalCer. Gp120 interacts with host ITGA4/ITGB7 complex; on CD4+ T-cells, this interaction results in rapid activation of integrin ITGAL/LFA-1, which facilitates efficient cell-to-cell spreading of HIV-1. Gp120 interacts with cell-associated heparan sulfate; this interaction increases virus infectivity on permissive cells and may be involved in infection of CD4- cells. In terms of assembly, the mature envelope protein (Env) consists of a homotrimer of non-covalently associated gp120-gp41 heterodimers. The resulting complex protrudes from the virus surface as a spike. There seems to be as few as 10 spikes on the average virion. Post-translationally, highly glycosylated by host. The high number of glycan on the protein is reffered to as 'glycan shield' because it contributes to hide protein sequence from adaptive immune system. Palmitoylation of the transmembrane protein and of Env polyprotein (prior to its proteolytic cleavage) is essential for their association with host cell membrane lipid rafts. Palmitoylation is therefore required for envelope trafficking to classical lipid rafts, but not for viral replication. In terms of processing, specific enzymatic cleavages in vivo yield mature proteins. Envelope glycoproteins are synthesized as an inactive precursor that is heavily N-glycosylated and processed likely by host cell furin in the Golgi to yield the mature SU and TM proteins. The cleavage site between SU and TM requires the minimal sequence [KR]-X-[KR]-R. About 2 of the 9 disulfide bonds of gp41 are reduced by P4HB/PDI, following binding to CD4 receptor.

It localises to the virion membrane. The protein localises to the host cell membrane. Its subcellular location is the host endosome membrane. Its function is as follows. Oligomerizes in the host endoplasmic reticulum into predominantly trimers. In a second time, gp160 transits in the host Golgi, where glycosylation is completed. The precursor is then proteolytically cleaved in the trans-Golgi and thereby activated by cellular furin or furin-like proteases to produce gp120 and gp41. Attaches the virus to the host lymphoid cell by binding to the primary receptor CD4. This interaction induces a structural rearrangement creating a high affinity binding site for a chemokine coreceptor like CXCR4 and/or CCR5. Acts as a ligand for CD209/DC-SIGN and CLEC4M/DC-SIGNR, which are respectively found on dendritic cells (DCs), and on endothelial cells of liver sinusoids and lymph node sinuses. These interactions allow capture of viral particles at mucosal surfaces by these cells and subsequent transmission to permissive cells. HIV subverts the migration properties of dendritic cells to gain access to CD4+ T-cells in lymph nodes. Virus transmission to permissive T-cells occurs either in trans (without DCs infection, through viral capture and transmission), or in cis (following DCs productive infection, through the usual CD4-gp120 interaction), thereby inducing a robust infection. In trans infection, bound virions remain infectious over days and it is proposed that they are not degraded, but protected in non-lysosomal acidic organelles within the DCs close to the cell membrane thus contributing to the viral infectious potential during DCs' migration from the periphery to the lymphoid tissues. On arrival at lymphoid tissues, intact virions recycle back to DCs' cell surface allowing virus transmission to CD4+ T-cells. In terms of biological role, acts as a class I viral fusion protein. Under the current model, the protein has at least 3 conformational states: pre-fusion native state, pre-hairpin intermediate state, and post-fusion hairpin state. During fusion of viral and target intracellular membranes, the coiled coil regions (heptad repeats) assume a trimer-of-hairpins structure, positioning the fusion peptide in close proximity to the C-terminal region of the ectodomain. The formation of this structure appears to drive apposition and subsequent fusion of viral and target cell membranes. Complete fusion occurs in host cell endosomes and is dynamin-dependent, however some lipid transfer might occur at the plasma membrane. The virus undergoes clathrin-dependent internalization long before endosomal fusion, thus minimizing the surface exposure of conserved viral epitopes during fusion and reducing the efficacy of inhibitors targeting these epitopes. Membranes fusion leads to delivery of the nucleocapsid into the cytoplasm. In Human immunodeficiency virus type 1 group N (isolate YBF106) (HIV-1), this protein is Envelope glycoprotein gp160.